Consider the following 210-residue polypeptide: ATP-dependent Clp protease proteolytic subunit (210 aa).

The Nucleophile role is filled by serine 106. Residue histidine 131 is part of the active site.

The protein belongs to the peptidase S14 family. As to quaternary structure, fourteen ClpP subunits assemble into 2 heptameric rings which stack back to back to give a disk-like structure with a central cavity, resembling the structure of eukaryotic proteasomes.

Its subcellular location is the cytoplasm. The enzyme catalyses Hydrolysis of proteins to small peptides in the presence of ATP and magnesium. alpha-casein is the usual test substrate. In the absence of ATP, only oligopeptides shorter than five residues are hydrolyzed (such as succinyl-Leu-Tyr-|-NHMec, and Leu-Tyr-Leu-|-Tyr-Trp, in which cleavage of the -Tyr-|-Leu- and -Tyr-|-Trp bonds also occurs).. Its function is as follows. Cleaves peptides in various proteins in a process that requires ATP hydrolysis. Has a chymotrypsin-like activity. Plays a major role in the degradation of misfolded proteins. The sequence is that of ATP-dependent Clp protease proteolytic subunit from Bartonella henselae (strain ATCC 49882 / DSM 28221 / CCUG 30454 / Houston 1) (Rochalimaea henselae).